Here is a 267-residue protein sequence, read N- to C-terminus: MSIPVFGLGTFRLQDQIVIDSVSQALTLGYRAIDTAQIYENEAPVGQAIQESGINRDELFITTKIWIANLSKDKLIPSLRESIQKLKTDYVDLTLIHWPSPNDEVSVAEFMSELLKAKGLGLTRQIGISNFTIDLMKQAIAAVGAEEIATNQIELSPLLQNRNVVDFAKQNGIAVTSYMTLAYGKALAEPVIKTIAEQHGATPAQVILSWAMQLGYGVIPSSTKAANLASNLLAQKLCLNAADMALIATLDRNERLVSPDGLAPKWD.

Catalysis depends on Tyr39, which acts as the Proton donor. His97 lines the substrate pocket. 179 to 231 (MTLAYGKALAEPVIKTIAEQHGATPAQVILSWAMQLGYGVIPSSTKAANLASN) lines the NADP(+) pocket.

This sequence belongs to the aldo/keto reductase family. As to quaternary structure, monomer.

Its subcellular location is the cytoplasm. It catalyses the reaction hydroxyacetone + NADP(+) = methylglyoxal + NADPH + H(+). In terms of biological role, aldo-keto reductase that significantly contributes to cellular methylglyoxal detoxification by catalyzing the NADPH-dependent conversion of methylglyoxal to acetol. The protein is Methylglyoxal reductase DkgB of Yersinia pestis.